A 222-amino-acid polypeptide reads, in one-letter code: ATP synthase F(0) complex subunit a (222 aa).

6 helical membrane passes run 7–27 (AFFD…AILL), 64–84 (WSLM…LGLL), 93–113 (QLTV…VLGF), 132–152 (FLIP…PITL), 160–180 (ITAG…LLSV), and 197–219 (ILEL…LYLH).

Belongs to the ATPase A chain family. Component of the ATP synthase complex composed at least of ATP5F1A/subunit alpha, ATP5F1B/subunit beta, ATP5MC1/subunit c (homooctomer), MT-ATP6/subunit a, MT-ATP8/subunit 8, ATP5ME/subunit e, ATP5MF/subunit f, ATP5MG/subunit g, ATP5MK/subunit k, ATP5MJ/subunit j, ATP5F1C/subunit gamma, ATP5F1D/subunit delta, ATP5F1E/subunit epsilon, ATP5PF/subunit F6, ATP5PB/subunit b, ATP5PD/subunit d, ATP5PO/subunit OSCP. ATP synthase complex consists of a soluble F(1) head domain (subunits alpha(3) and beta(3)) - the catalytic core - and a membrane F(0) domain - the membrane proton channel (subunits c, a, 8, e, f, g, k and j). These two domains are linked by a central stalk (subunits gamma, delta, and epsilon) rotating inside the F1 region and a stationary peripheral stalk (subunits F6, b, d, and OSCP). Interacts with DNAJC30; interaction is direct.

The protein resides in the mitochondrion inner membrane. The catalysed reaction is H(+)(in) = H(+)(out). In terms of biological role, subunit a, of the mitochondrial membrane ATP synthase complex (F(1)F(0) ATP synthase or Complex V) that produces ATP from ADP in the presence of a proton gradient across the membrane which is generated by electron transport complexes of the respiratory chain. ATP synthase complex consist of a soluble F(1) head domain - the catalytic core - and a membrane F(1) domain - the membrane proton channel. These two domains are linked by a central stalk rotating inside the F(1) region and a stationary peripheral stalk. During catalysis, ATP synthesis in the catalytic domain of F(1) is coupled via a rotary mechanism of the central stalk subunits to proton translocation. With the subunit c (ATP5MC1), forms the proton-conducting channel in the F(0) domain, that contains two crucial half-channels (inlet and outlet) that facilitate proton movement from the mitochondrial intermembrane space (IMS) into the matrix. Protons are taken up via the inlet half-channel and released through the outlet half-channel, following a Grotthuss mechanism. The chain is ATP synthase F(0) complex subunit a from Elephas maximus (Indian elephant).